Consider the following 579-residue polypeptide: Adipocyte plasma membrane-associated protein Hemomucin (579 aa).

Topologically, residues 1–6 (MGLLYA) are cytoplasmic. The helical transmembrane segment at 7–29 (LRVRIMNFMIFFLLIILMPGLPP) threads the bilayer. Residues 30 to 579 (RTTFPFKDYI…INKQGVNVEL (550 aa)) are Extracellular-facing. N-linked (GlcNAc...) asparagine glycosylation is found at N213 and N217. A disordered region spans residues 427–579 (GLEASIGVPP…INKQGVNVEL (153 aa)). Positions 435 to 529 (PPSKATPKPK…PKPTTTTTPT (95 aa)) are enriched in low complexity.

Belongs to the strictosidine synthase family. Interacts with sturkopf. Post-translationally, O-glycosylated. Glycosylated in the ovary of 4 day old females. In terms of processing, phosphorylated. Detected in ovaries (at protein level). In larvae, detected in the fat body, salivary glands, imaginal disks and gut (at protein level). In adults, expressed in the cardia, and in regions of the ventriculus including the area posterior to the cardia. In females also expressed in follicle cells.

It is found in the cell membrane. In terms of biological role, transmembrane mucin that may be involved in cellular adhesion and the innate immune response. Membrane-tethered mucins are involved in many cell surface functions and form a physical barrier around cells to regulate cell-cell and/or cell-substrate interactions, and protect against pathogens or harmful extracellular conditions. This mucin likely acts in hemocyte adhesion as it is released from hemocytes during coagulation and is also able to bind lipophorin particles which form part of the hemocyte coagulogen. Able to induce expression of the antibacterial proteins in the presence of GalNAc-specific lectins and so probably also functions in the innate immune response. The polypeptide is Adipocyte plasma membrane-associated protein Hemomucin (Drosophila melanogaster (Fruit fly)).